A 948-amino-acid polypeptide reads, in one-letter code: Coatomer subunit beta-2 (948 aa).

HEAT repeat units lie at residues 49–87 (ETIP…TDSK), 92–126 (PEMI…MKET), 127–164 (EIVE…LPHG), 274–311 (TAIR…TLHR), 312–349 (DIMV…HHNI), and 391–428 (EVAS…TNPK).

In terms of assembly, oligomeric complex that consists of at least the alpha, beta, beta', gamma, delta, epsilon and zeta subunits.

Its subcellular location is the cytoplasm. It localises to the golgi apparatus membrane. The protein resides in the cytoplasmic vesicle. It is found in the COPI-coated vesicle membrane. The coatomer is a cytosolic protein complex that binds to dilysine motifs and reversibly associates with Golgi non-clathrin-coated vesicles, which further mediate biosynthetic protein transport from the ER, via the Golgi up to the trans Golgi network. Coatomer complex is required for budding from Golgi membranes, and is essential for the retrograde Golgi-to-ER transport of dilysine-tagged proteins. The protein is Coatomer subunit beta-2 of Arabidopsis thaliana (Mouse-ear cress).